We begin with the raw amino-acid sequence, 290 residues long: Bifunctional protein FolD (290 aa).

NADP(+) is bound by residues 164-166 (GRS), Ser-193, and Ile-234.

This sequence belongs to the tetrahydrofolate dehydrogenase/cyclohydrolase family. Homodimer.

It carries out the reaction (6R)-5,10-methylene-5,6,7,8-tetrahydrofolate + NADP(+) = (6R)-5,10-methenyltetrahydrofolate + NADPH. The enzyme catalyses (6R)-5,10-methenyltetrahydrofolate + H2O = (6R)-10-formyltetrahydrofolate + H(+). It participates in one-carbon metabolism; tetrahydrofolate interconversion. Catalyzes the oxidation of 5,10-methylenetetrahydrofolate to 5,10-methenyltetrahydrofolate and then the hydrolysis of 5,10-methenyltetrahydrofolate to 10-formyltetrahydrofolate. This is Bifunctional protein FolD from Cytophaga hutchinsonii (strain ATCC 33406 / DSM 1761 / CIP 103989 / NBRC 15051 / NCIMB 9469 / D465).